The following is a 327-amino-acid chain: DNA-directed RNA polymerase subunit alpha (327 aa).

The interval methionine 1–asparagine 227 is alpha N-terminal domain (alpha-NTD). An alpha C-terminal domain (alpha-CTD) region spans residues serine 244–serine 327.

This sequence belongs to the RNA polymerase alpha chain family. In terms of assembly, homodimer. The RNAP catalytic core consists of 2 alpha, 1 beta, 1 beta' and 1 omega subunit. When a sigma factor is associated with the core the holoenzyme is formed, which can initiate transcription.

It carries out the reaction RNA(n) + a ribonucleoside 5'-triphosphate = RNA(n+1) + diphosphate. DNA-dependent RNA polymerase catalyzes the transcription of DNA into RNA using the four ribonucleoside triphosphates as substrates. The chain is DNA-directed RNA polymerase subunit alpha from Tropheryma whipplei (strain TW08/27) (Whipple's bacillus).